Reading from the N-terminus, the 223-residue chain is Urease accessory protein UreF (223 aa).

This sequence belongs to the UreF family. In terms of assembly, ureD, UreF and UreG form a complex that acts as a GTP-hydrolysis-dependent molecular chaperone, activating the urease apoprotein by helping to assemble the nickel containing metallocenter of UreC. The UreE protein probably delivers the nickel.

It is found in the cytoplasm. In terms of biological role, required for maturation of urease via the functional incorporation of the urease nickel metallocenter. The protein is Urease accessory protein UreF of Rhizobium etli (strain ATCC 51251 / DSM 11541 / JCM 21823 / NBRC 15573 / CFN 42).